A 126-amino-acid polypeptide reads, in one-letter code: Large-conductance mechanosensitive channel (126 aa).

2 consecutive transmembrane segments (helical) span residues 8–28 (FAMR…AAFT) and 70–90 (IQQI…VKVI).

Belongs to the MscL family. As to quaternary structure, homopentamer.

The protein resides in the cell membrane. In terms of biological role, channel that opens in response to stretch forces in the membrane lipid bilayer. May participate in the regulation of osmotic pressure changes within the cell. This chain is Large-conductance mechanosensitive channel, found in Exiguobacterium sp. (strain ATCC BAA-1283 / AT1b).